A 463-amino-acid chain; its full sequence is A-type ATP synthase subunit B (463 aa).

This sequence belongs to the ATPase alpha/beta chains family. As to quaternary structure, has multiple subunits with at least A(3), B(3), C, D, E, F, H, I and proteolipid K(x).

It is found in the cell membrane. Its function is as follows. Component of the A-type ATP synthase that produces ATP from ADP in the presence of a proton gradient across the membrane. The B chain is a regulatory subunit. This is A-type ATP synthase subunit B from Thermococcus gammatolerans (strain DSM 15229 / JCM 11827 / EJ3).